Reading from the N-terminus, the 149-residue chain is Large ribosomal subunit protein bL20m (149 aa).

Residues 1–9 constitute a mitochondrion transit peptide; that stretch reads MVFLTAQLW.

Belongs to the bacterial ribosomal protein bL20 family. As to quaternary structure, component of the mitochondrial large ribosomal subunit (mt-LSU). Mature mammalian 55S mitochondrial ribosomes consist of a small (28S) and a large (39S) subunit. The 28S small subunit contains a 12S ribosomal RNA (12S mt-rRNA) and 30 different proteins. The 39S large subunit contains a 16S rRNA (16S mt-rRNA), a copy of mitochondrial valine transfer RNA (mt-tRNA(Val)), which plays an integral structural role, and 52 different proteins. Interacts with OXA1L.

It localises to the mitochondrion. This Homo sapiens (Human) protein is Large ribosomal subunit protein bL20m (MRPL20).